Reading from the N-terminus, the 283-residue chain is Bifunctional protein FolD (283 aa).

NADP(+) is bound by residues 166 to 168 and Ser191; that span reads GRS.

Belongs to the tetrahydrofolate dehydrogenase/cyclohydrolase family. As to quaternary structure, homodimer.

It catalyses the reaction (6R)-5,10-methylene-5,6,7,8-tetrahydrofolate + NADP(+) = (6R)-5,10-methenyltetrahydrofolate + NADPH. The catalysed reaction is (6R)-5,10-methenyltetrahydrofolate + H2O = (6R)-10-formyltetrahydrofolate + H(+). The protein operates within one-carbon metabolism; tetrahydrofolate interconversion. Catalyzes the oxidation of 5,10-methylenetetrahydrofolate to 5,10-methenyltetrahydrofolate and then the hydrolysis of 5,10-methenyltetrahydrofolate to 10-formyltetrahydrofolate. This chain is Bifunctional protein FolD, found in Pediococcus pentosaceus (strain ATCC 25745 / CCUG 21536 / LMG 10740 / 183-1w).